The sequence spans 188 residues: Elongation factor P (188 aa).

This sequence belongs to the elongation factor P family.

It is found in the cytoplasm. It functions in the pathway protein biosynthesis; polypeptide chain elongation. Its function is as follows. Involved in peptide bond synthesis. Stimulates efficient translation and peptide-bond synthesis on native or reconstituted 70S ribosomes in vitro. Probably functions indirectly by altering the affinity of the ribosome for aminoacyl-tRNA, thus increasing their reactivity as acceptors for peptidyl transferase. The chain is Elongation factor P from Gluconacetobacter diazotrophicus (strain ATCC 49037 / DSM 5601 / CCUG 37298 / CIP 103539 / LMG 7603 / PAl5).